The primary structure comprises 386 residues: Succinate--CoA ligase [ADP-forming] subunit beta (386 aa).

The 236-residue stretch at 9-244 (KEILKQYGVK…LDEEDEKEIE (236 aa)) folds into the ATP-grasp domain. Residues K46, 53-55 (GRG), E99, C102, and E107 each bind ATP. Residues N199 and D213 each coordinate Mg(2+). Residues N264 and 321–323 (GIM) contribute to the substrate site.

It belongs to the succinate/malate CoA ligase beta subunit family. Heterotetramer of two alpha and two beta subunits. Mg(2+) is required as a cofactor.

It catalyses the reaction succinate + ATP + CoA = succinyl-CoA + ADP + phosphate. The enzyme catalyses GTP + succinate + CoA = succinyl-CoA + GDP + phosphate. Its pathway is carbohydrate metabolism; tricarboxylic acid cycle; succinate from succinyl-CoA (ligase route): step 1/1. In terms of biological role, succinyl-CoA synthetase functions in the citric acid cycle (TCA), coupling the hydrolysis of succinyl-CoA to the synthesis of either ATP or GTP and thus represents the only step of substrate-level phosphorylation in the TCA. The beta subunit provides nucleotide specificity of the enzyme and binds the substrate succinate, while the binding sites for coenzyme A and phosphate are found in the alpha subunit. The polypeptide is Succinate--CoA ligase [ADP-forming] subunit beta (Brevibacillus brevis (strain 47 / JCM 6285 / NBRC 100599)).